Consider the following 157-residue polypeptide: Ribosomal RNA large subunit methyltransferase H (157 aa).

S-adenosyl-L-methionine is bound by residues leucine 73, glycine 104, and 123–128; that span reads LGPLTL.

This sequence belongs to the RNA methyltransferase RlmH family. Homodimer.

Its subcellular location is the cytoplasm. The enzyme catalyses pseudouridine(1915) in 23S rRNA + S-adenosyl-L-methionine = N(3)-methylpseudouridine(1915) in 23S rRNA + S-adenosyl-L-homocysteine + H(+). Specifically methylates the pseudouridine at position 1915 (m3Psi1915) in 23S rRNA. This Xylella fastidiosa (strain M12) protein is Ribosomal RNA large subunit methyltransferase H.